The following is a 269-amino-acid chain: MRSLADFEFNKAPLCEGMILACEAIRRDFPSQDVYDELERLVSLAKEEISQLLPLEEQLEKLIALFYGDWGFKASRGVYRLSDALWLDQVLKNRQGSAVSLGAVLLWVANRLDLPLLPVIFPTQLILRIECPDGEIWLINPFNGESLSEHMLDVWLKGNISPSAELFYEDLDEADNIEVIRKLLDTLKASLMEENQMELALRTSEALLQFNPEDPYEIRDRGLIYAQLDCEHVALNDLSYFVEQCPEDPISEMIRAQINNIAHKHIVLH.

This sequence belongs to the UPF0162 family.

This is UPF0162 protein YchA (ychA) from Escherichia coli O157:H7.